Consider the following 256-residue polypeptide: Thiazole synthase (256 aa).

Lys95 serves as the catalytic Schiff-base intermediate with DXP. Residues Gly156, 182–183 (AG), and 204–205 (NT) each bind 1-deoxy-D-xylulose 5-phosphate.

This sequence belongs to the ThiG family. As to quaternary structure, homotetramer. Forms heterodimers with either ThiH or ThiS.

It is found in the cytoplasm. The enzyme catalyses [ThiS sulfur-carrier protein]-C-terminal-Gly-aminoethanethioate + 2-iminoacetate + 1-deoxy-D-xylulose 5-phosphate = [ThiS sulfur-carrier protein]-C-terminal Gly-Gly + 2-[(2R,5Z)-2-carboxy-4-methylthiazol-5(2H)-ylidene]ethyl phosphate + 2 H2O + H(+). It functions in the pathway cofactor biosynthesis; thiamine diphosphate biosynthesis. Functionally, catalyzes the rearrangement of 1-deoxy-D-xylulose 5-phosphate (DXP) to produce the thiazole phosphate moiety of thiamine. Sulfur is provided by the thiocarboxylate moiety of the carrier protein ThiS. In vitro, sulfur can be provided by H(2)S. The sequence is that of Thiazole synthase from Klebsiella pneumoniae subsp. pneumoniae (strain ATCC 700721 / MGH 78578).